A 98-amino-acid polypeptide reads, in one-letter code: MQPEQIIRRPIILTEKSSRLRDQGNKVIFEVRREANKIQIKDAIQTLFKVGVVDVNTLIMRGKDKRMGRGYAKLRNWKKAIVTLKEGDEIQFFDEKAE.

It belongs to the universal ribosomal protein uL23 family. Part of the 50S ribosomal subunit. Contacts protein L29, and trigger factor when it is bound to the ribosome.

Its function is as follows. One of the early assembly proteins it binds 23S rRNA. One of the proteins that surrounds the polypeptide exit tunnel on the outside of the ribosome. Forms the main docking site for trigger factor binding to the ribosome. This chain is Large ribosomal subunit protein uL23, found in Sorangium cellulosum (strain So ce56) (Polyangium cellulosum (strain So ce56)).